A 444-amino-acid polypeptide reads, in one-letter code: UDP-N-acetylglucosamine 1-carboxyvinyltransferase (444 aa).

Phosphoenolpyruvate is bound at residue 22–23 (KN). Arg-94 is a UDP-N-acetyl-alpha-D-glucosamine binding site. Asp-119 acts as the Proton donor in catalysis. Asp-309 and Val-331 together coordinate UDP-N-acetyl-alpha-D-glucosamine.

The protein belongs to the EPSP synthase family. MurA subfamily.

The protein localises to the cytoplasm. The enzyme catalyses phosphoenolpyruvate + UDP-N-acetyl-alpha-D-glucosamine = UDP-N-acetyl-3-O-(1-carboxyvinyl)-alpha-D-glucosamine + phosphate. It functions in the pathway cell wall biogenesis; peptidoglycan biosynthesis. Its function is as follows. Cell wall formation. Adds enolpyruvyl to UDP-N-acetylglucosamine. The protein is UDP-N-acetylglucosamine 1-carboxyvinyltransferase of Chlamydia trachomatis serovar A (strain ATCC VR-571B / DSM 19440 / HAR-13).